A 211-amino-acid polypeptide reads, in one-letter code: MKAISRVLIAMVAAIAALFTSTGTSHAGLDNELSLVDGQDRTLTVQQWDTFLNGVFPLDRNRLTREWFHSGRAKYIVAGPGADEFEGTLELGYQIGFPWSLGVGINFSYTTPNILIDDGDITAPPFGLNSVITPNLFPGVSISADLGNGPGIQEVATFSVDVSGAEGGVAVSNAHGTVTGAAGGVLLRPFARLIASTGDSVTTYGEPWNMN.

Positions 1–27 are cleaved as a signal peptide; that stretch reads MKAISRVLIAMVAAIAALFTSTGTSHA.

It belongs to the mycobacterial porin (TC 1.B.24) family. As to quaternary structure, forms very stable octamers. Isolated as a 100 kDa complex that can be reduced to monomers upon boiling in 80% dimethyl sulfoxide for 15 minutes. Structures show a goblet with the wide end on the exterior of the outer membrane and a central channel. It is not known if mixed oligomers of MspA with other Msp subunits form in vivo.

Its subcellular location is the cell outer membrane. It localises to the secreted. It is found in the cell wall. In terms of biological role, the major porin in this organism, forms a water-filled channel which favors the permeation of cations, amino acids, iron Fe(3+) and less efficiently phosphate. Does not transport Fe-ExoMS, the predominant siderophore. Plays a role in transport of beta-lactamase and hydrophilic fluoroquinolone antibiotics such as norfloxacin as well as chloramphenicol. There are about 2400 porins in wild-type, 800 in an mspA deletion and 150 in a double mspA-mspC deletion. Different conductance values with maxima at 2.3 and 4.6 nanosiemens might be caused by a simultaneous reconstitution of MspA channels into the membrane or by the existence of different MspA conformations. The polypeptide is Porin MspA (mspA) (Mycolicibacterium smegmatis (strain ATCC 700084 / mc(2)155) (Mycobacterium smegmatis)).